A 396-amino-acid chain; its full sequence is Tryptophan synthase beta chain (396 aa).

Lys86 is subject to N6-(pyridoxal phosphate)lysine.

Belongs to the TrpB family. Tetramer of two alpha and two beta chains. Requires pyridoxal 5'-phosphate as cofactor.

The catalysed reaction is (1S,2R)-1-C-(indol-3-yl)glycerol 3-phosphate + L-serine = D-glyceraldehyde 3-phosphate + L-tryptophan + H2O. Its pathway is amino-acid biosynthesis; L-tryptophan biosynthesis; L-tryptophan from chorismate: step 5/5. In terms of biological role, the beta subunit is responsible for the synthesis of L-tryptophan from indole and L-serine. The sequence is that of Tryptophan synthase beta chain from Francisella tularensis subsp. holarctica (strain FTNF002-00 / FTA).